A 387-amino-acid chain; its full sequence is MKAVHFGAGNIGRGFVGLLLHNAGYEVVFADVAEGLIAQLADADSYAVHEVGESPAVQTVDNFRALNSNTQEAELITEIATADIVTTAVGPHILKFVAPVIARGIAARGAGMAPLQVMACENAINATDVLAREVASRPEAAGGALDGQAVFANTAVDRIVPNQEAGQGLDVTVESFYEWVIDRTAFAGSEPEIPGATFVDELAPYIERKLFTVNTGHASAAYFGFEAGLEKISDAMADQDVAEDVRAVLEETKQLLVAKHGFSNEAQEAYVQKILVRFTNPHLPDTVNRVGRAPLRKLSRHERFIGPAAELAERGVVPEALLGAISAALRFTDPADAEATELAGILASGSAADATARITGLDPDHPLFNAVSTLVEERQAELAATSA.

3-14 (AVHFGAGNIGRG) lines the NAD(+) pocket.

It belongs to the mannitol dehydrogenase family.

It carries out the reaction D-mannitol 1-phosphate + NAD(+) = beta-D-fructose 6-phosphate + NADH + H(+). This is Mannitol-1-phosphate 5-dehydrogenase from Pseudarthrobacter chlorophenolicus (strain ATCC 700700 / DSM 12829 / CIP 107037 / JCM 12360 / KCTC 9906 / NCIMB 13794 / A6) (Arthrobacter chlorophenolicus).